The sequence spans 509 residues: Movement protein (509 aa).

The protein localises to the host cell junction. It localises to the host plasmodesma. It is found in the host cytoplasm. Transports viral genome to neighboring plant cells directly through plasmosdesmata, without any budding. The movement protein allows efficient cell to cell propagation, by bypassing the host cell wall barrier. Increases virus accumulation and symptom severity. This Rice dwarf virus (isolate Akita) (RDV) protein is Movement protein.